The chain runs to 92 residues: Islet amyloid polypeptide (92 aa).

An N-terminal signal peptide occupies residues 1-22 (MCLLRLPVTLLVLCVALNELKA). The propeptide occupies 23–34 (TSIASDTGHQVG). The cysteines at positions 38 and 43 are disulfide-linked. Tyrosine 73 is subject to Tyrosine amide. The propeptide occupies 77-92 (NAPQISDRELLHYLPL).

Belongs to the calcitonin family. Can form homodimers. Interacts with IDE and INS. Interaction with INS inhibits homodimerization and fibril formation.

The protein resides in the secreted. In terms of biological role, amylin/IAPP is a glucoregulatory peptide hormone that plays an important role in the regulation of energy homeostasis. Selectively inhibits insulin-stimulated glucose utilization and glycogen deposition in muscle, while not affecting adipocyte glucose metabolism. IAPP function is mediated by the CALCR-RAMPs (AMYRs) receptor complexes. Amylin can also bind CALCR receptor in the absence of RAMPs, although it is more selective for AMYRs. This chain is Islet amyloid polypeptide (IAPP), found in Cavia porcellus (Guinea pig).